The primary structure comprises 300 residues: Lipoyl synthase 2 (300 aa).

[4Fe-4S] cluster contacts are provided by C46, C51, C57, C72, C76, C79, and S294. A Radical SAM core domain is found at Y58–S283.

This sequence belongs to the radical SAM superfamily. Lipoyl synthase family. Requires [4Fe-4S] cluster as cofactor.

It is found in the cytoplasm. It catalyses the reaction [[Fe-S] cluster scaffold protein carrying a second [4Fe-4S](2+) cluster] + N(6)-octanoyl-L-lysyl-[protein] + 2 oxidized [2Fe-2S]-[ferredoxin] + 2 S-adenosyl-L-methionine + 4 H(+) = [[Fe-S] cluster scaffold protein] + N(6)-[(R)-dihydrolipoyl]-L-lysyl-[protein] + 4 Fe(3+) + 2 hydrogen sulfide + 2 5'-deoxyadenosine + 2 L-methionine + 2 reduced [2Fe-2S]-[ferredoxin]. The protein operates within protein modification; protein lipoylation via endogenous pathway; protein N(6)-(lipoyl)lysine from octanoyl-[acyl-carrier-protein]: step 2/2. In terms of biological role, catalyzes the radical-mediated insertion of two sulfur atoms into the C-6 and C-8 positions of the octanoyl moiety bound to the lipoyl domains of lipoate-dependent enzymes, thereby converting the octanoylated domains into lipoylated derivatives. This chain is Lipoyl synthase 2, found in Nostoc sp. (strain PCC 7120 / SAG 25.82 / UTEX 2576).